The primary structure comprises 433 residues: MRKITSILLTCVMGCTATYAADWDGVPVPANPGSGKTWELHPLSDDFNYEAPAAGKSTRFYERWKEGFINPWTGPGLTEWHPHYSYVSGGKLAITSGRKPGTNQVYLGSITSKAPLTYPVYMEARAKLSNMVLASDFWFLSADSTEEIDVIEAYGSDRPGQEWYAERLHLSHHVFIRDPFQDYQPTDAGSWYADGKGTKWRDAFHRVGVYWRDPWHLEYYVDGKLVRTVSGQDIIDPNGFTGGTGLSKPMYAIINMEDQNWRSDNGITPTDAELADPNRNTYYVDWVRFYKPVPINGNATTVELGNFHNTGKDGANVTGDTVLGFNKNGNNINYNTKGDWADYTVNLPAAGEYRVDLVIASPMSSGLGAELTFAGNAAKTVTLSNTGGWESYQTFTLPQTISVSSPGNYNFRLKSTGSSNWQWNGDEIRFVKL.

An N-terminal signal peptide occupies residues 1–20; sequence MRKITSILLTCVMGCTATYA. A GH16 domain is found at 21-295; sequence ADWDGVPVPA…WVRFYKPVPI (275 aa). E147 (nucleophile) is an active-site residue. The active-site Proton donor is the E152. A CBM6 domain is found at 300 to 431; sequence TTVELGNFHN…QWNGDEIRFV (132 aa).

This sequence belongs to the glycosyl hydrolase 16 family. In terms of assembly, monomer.

It localises to the periplasm. The enzyme catalyses Hydrolysis of (1-&gt;4)-beta-D-galactosidic linkages in agarose, giving the tetramer as the predominant product.. Its activity is regulated as follows. Activity is abolished by Hg(2+), Cu(2+), Pb(2+) and Zn(2+) ions, but is not affected by NaCl up to at least 1.0 M, Mg(2+), K(+) and Ca(2+). Not affected by iodoacetamide, p-chloromercuribenzoate, dithiothreitol, 2-mercaptoethanol, EDTA and sodium dodecyl sulfate. Inhibited by N-bromosuccinimide. Its function is as follows. Endo-type beta-agarase, which produces neoagarotetraose (NA4) as the main final product, with a small amount of neoagarohexaose (NA6) and neoagarobiose (NA2). The chain is Beta-agarase AgaA from Microbulbifer thermotolerans.